The sequence spans 171 residues: Shikimate kinase (171 aa).

14–19 (GAGKST) lines the ATP pocket. Serine 18 serves as a coordination point for Mg(2+). Positions 36, 60, and 82 each coordinate substrate. Arginine 120 is a binding site for ATP. Arginine 139 is a binding site for substrate. Glutamine 156 provides a ligand contact to ATP.

It belongs to the shikimate kinase family. In terms of assembly, monomer. The cofactor is Mg(2+).

Its subcellular location is the cytoplasm. The catalysed reaction is shikimate + ATP = 3-phosphoshikimate + ADP + H(+). It functions in the pathway metabolic intermediate biosynthesis; chorismate biosynthesis; chorismate from D-erythrose 4-phosphate and phosphoenolpyruvate: step 5/7. Functionally, catalyzes the specific phosphorylation of the 3-hydroxyl group of shikimic acid using ATP as a cosubstrate. This is Shikimate kinase from Shewanella sp. (strain ANA-3).